Reading from the N-terminus, the 80-residue chain is Conotoxin VnMSGL-0123 (80 aa).

A signal peptide spans 1–20 (MSGLGIMVLTLLLLVSMATS). Positions 21-44 (HQDGGGKQATQRDAINVRRRRSIT) are excised as a propeptide. 3 cysteine pairs are disulfide-bonded: cysteine 53–cysteine 65, cysteine 57–cysteine 74, and cysteine 64–cysteine 78. A Phenylalanine amide modification is found at phenylalanine 79.

The protein belongs to the conotoxin O3 superfamily. As to expression, expressed by the venom duct.

The protein resides in the secreted. This chain is Conotoxin VnMSGL-0123, found in Conus ventricosus (Mediterranean cone).